Reading from the N-terminus, the 399-residue chain is 4-hydroxyphenylpyruvate dioxygenase (399 aa).

VOC domains are found at residues 23–166 (GYDH…LIER) and 197–355 (RIDH…LFTK). Fe cation-binding residues include His-200, His-283, and Glu-366.

Belongs to the 4HPPD family. It depends on Fe cation as a cofactor.

It catalyses the reaction 3-(4-hydroxyphenyl)pyruvate + O2 = homogentisate + CO2. It functions in the pathway amino-acid degradation; L-phenylalanine degradation; acetoacetate and fumarate from L-phenylalanine: step 3/6. The polypeptide is 4-hydroxyphenylpyruvate dioxygenase (TCRP) (Coccidioides posadasii (strain C735) (Valley fever fungus)).